Consider the following 377-residue polypeptide: Succinyl-diaminopimelate desuccinylase (377 aa).

His67 contributes to the Zn(2+) binding site. The active site involves Asp69. Asp100 is a Zn(2+) binding site. The Proton acceptor role is filled by Glu134. Zn(2+) is bound by residues Glu135, Glu163, and His349.

It belongs to the peptidase M20A family. DapE subfamily. As to quaternary structure, homodimer. Requires Zn(2+) as cofactor. Co(2+) is required as a cofactor.

It catalyses the reaction N-succinyl-(2S,6S)-2,6-diaminopimelate + H2O = (2S,6S)-2,6-diaminopimelate + succinate. It participates in amino-acid biosynthesis; L-lysine biosynthesis via DAP pathway; LL-2,6-diaminopimelate from (S)-tetrahydrodipicolinate (succinylase route): step 3/3. Functionally, catalyzes the hydrolysis of N-succinyl-L,L-diaminopimelic acid (SDAP), forming succinate and LL-2,6-diaminopimelate (DAP), an intermediate involved in the bacterial biosynthesis of lysine and meso-diaminopimelic acid, an essential component of bacterial cell walls. This chain is Succinyl-diaminopimelate desuccinylase, found in Actinobacillus pleuropneumoniae serotype 5b (strain L20).